The sequence spans 79 residues: uncharacterized protein (79 aa).

One can recognise a TM2 domain in the interval 3-54; the sequence is SKKNKIVAALLAFFFGGLGIHKFYLGRVGQGILYILFCWTGIPSIIAFIEFI. 2 consecutive transmembrane segments (helical) span residues 8 to 28 and 37 to 57; these read IVAA…FYLG and ILFC…IIFL.

The protein resides in the cell membrane. This is an uncharacterized protein from Bacillus subtilis (strain 168).